The chain runs to 1112 residues: Lysylphosphatidylglycerol biosynthesis bifunctional protein LysX (1112 aa).

The tract at residues 1–613 is phosphatidylglycerol lysyltransferase; it reads MTLTSPPRTR…VLHHDGTAPD (613 aa). 7 helical membrane-spanning segments follow: residues 18–38, 60–80, 84–104, 118–138, 152–172, 209–229, and 308–328; these read VPAAAGWTVGVIATLSLIASV, FPDTSFAWAFVLALLAGALAA, IAWWILLLYMVAAAGWNVADL, VIGLAFHLAAVAFLLLARPLF, GVLAAGMAVGVLVGWGLLELF, VNALLGLFGALALMAAAIVLF, and AWLALCGTYGWAPGVMGASVG. Residues 614 to 1112 form a lysine--tRNA ligase region; sequence MSGLRTDTAD…TLPFPLARPR (499 aa). The OB DNA-binding region spans 675 to 748; the sequence is VAGRVLRIRD…GTRSLLVRHW (74 aa). Residues aspartate 1024 and glutamate 1031 each contribute to the Mg(2+) site.

This sequence in the N-terminal section; belongs to the LPG synthetase family. It in the C-terminal section; belongs to the class-II aminoacyl-tRNA synthetase family. Requires Mg(2+) as cofactor.

The protein resides in the cell membrane. It catalyses the reaction tRNA(Lys) + L-lysine + ATP = L-lysyl-tRNA(Lys) + AMP + diphosphate. The enzyme catalyses L-lysyl-tRNA(Lys) + a 1,2-diacyl-sn-glycero-3-phospho-(1'-sn-glycerol) = a 1,2-diacyl-sn-glycero-3-phospho-1'-(3'-O-L-lysyl)-sn-glycerol + tRNA(Lys). In terms of biological role, catalyzes the production of L-lysyl-tRNA(Lys)transfer and the transfer of a lysyl group from L-lysyl-tRNA(Lys) to membrane-bound phosphatidylglycerol (PG), which produces lysylphosphatidylglycerol (LPG), one of the components of the bacterial membrane with a positive net charge. LPG synthesis contributes to the resistance to cationic antimicrobial peptides (CAMPs) and likely protects M.tuberculosis against the CAMPs produced by competiting microorganisms (bacteriocins). In fact, the modification of anionic phosphatidylglycerol with positively charged L-lysine results in repulsion of the peptides. This Mycobacterium sp. (strain KMS) protein is Lysylphosphatidylglycerol biosynthesis bifunctional protein LysX (lysX).